The sequence spans 35 residues: Photosystem II reaction center protein T (35 aa).

The chain crosses the membrane as a helical span at residues 3 to 23 (ALVYTFLLVSTLGIIFFAIFF).

The protein belongs to the PsbT family. In terms of assembly, PSII is composed of 1 copy each of membrane proteins PsbA, PsbB, PsbC, PsbD, PsbE, PsbF, PsbH, PsbI, PsbJ, PsbK, PsbL, PsbM, PsbT, PsbY, PsbZ, Psb30/Ycf12, at least 3 peripheral proteins of the oxygen-evolving complex and a large number of cofactors. It forms dimeric complexes.

Its subcellular location is the plastid. It is found in the chloroplast thylakoid membrane. Its function is as follows. Found at the monomer-monomer interface of the photosystem II (PS II) dimer, plays a role in assembly and dimerization of PSII. PSII is a light-driven water plastoquinone oxidoreductase, using light energy to abstract electrons from H(2)O, generating a proton gradient subsequently used for ATP formation. This chain is Photosystem II reaction center protein T, found in Asarum canadense (Wild ginger).